The following is a 418-amino-acid chain: Serine hydroxymethyltransferase (418 aa).

(6S)-5,6,7,8-tetrahydrofolate contacts are provided by residues leucine 121 and glycine 125–leucine 127. At lysine 230 the chain carries N6-(pyridoxal phosphate)lysine. Residues glutamate 246 and serine 355–phenylalanine 357 contribute to the (6S)-5,6,7,8-tetrahydrofolate site.

The protein belongs to the SHMT family. As to quaternary structure, homodimer. Pyridoxal 5'-phosphate is required as a cofactor.

The protein localises to the cytoplasm. It catalyses the reaction (6R)-5,10-methylene-5,6,7,8-tetrahydrofolate + glycine + H2O = (6S)-5,6,7,8-tetrahydrofolate + L-serine. It participates in one-carbon metabolism; tetrahydrofolate interconversion. It functions in the pathway amino-acid biosynthesis; glycine biosynthesis; glycine from L-serine: step 1/1. In terms of biological role, catalyzes the reversible interconversion of serine and glycine with tetrahydrofolate (THF) serving as the one-carbon carrier. This reaction serves as the major source of one-carbon groups required for the biosynthesis of purines, thymidylate, methionine, and other important biomolecules. Also exhibits THF-independent aldolase activity toward beta-hydroxyamino acids, producing glycine and aldehydes, via a retro-aldol mechanism. The polypeptide is Serine hydroxymethyltransferase (Streptococcus pneumoniae serotype 19F (strain G54)).